A 664-amino-acid polypeptide reads, in one-letter code: Alcohol oxidase (664 aa).

FAD is bound at residue 8–39 (DIIVVGGGSTGCCIAGRLANLDDQNLTVALIE). His-568 acts as the Proton acceptor in catalysis. The Microbody targeting signal signature appears at 662–664 (ARF).

The protein belongs to the GMC oxidoreductase family. In terms of assembly, homooctamer. FAD serves as cofactor.

Its subcellular location is the peroxisome matrix. The enzyme catalyses a primary alcohol + O2 = an aldehyde + H2O2. It participates in energy metabolism; methane degradation. Functionally, catalyzes the oxidation of methanol to formaldehyde and hydrogen peroxide, the first step in the methanol utilization pathway of methylotrophic yeasts. This chain is Alcohol oxidase (MOX), found in Pichia angusta (Yeast).